The sequence spans 888 residues: 3-hydroxy-3-methylglutaryl-coenzyme A reductase (888 aa).

At 1-9 (MLSRLFRMH) the chain is on the cytoplasmic side. A helical membrane pass occupies residues 10–39 (GLFVASHPWEVIVGTVTLTICMMSMNMFTG). Over 40–56 (NDKICGWNYECPKFEED) the chain is Lumenal. Residues 57-78 (VLSSDIIILTITRCIAILYIYF) traverse the membrane as a helical segment. The SSD domain maps to 61-218 (DIIILTITRC…MTFFPACVSL (158 aa)). The short motif at 75-78 (YIYF) is the INSIG-binding motif element. Over 79–89 (QFQNLRQLGSK) the chain is Cytoplasmic. Lysine 89 is covalently cross-linked (Glycyl lysine isopeptide (Lys-Gly) (interchain with G-Cter in ubiquitin)). Residues 90–114 (YILGIAGLFTIFSSFVFSTVVIHFL) traverse the membrane as a helical segment. Over 115 to 123 (DKELTGLNE) the chain is Lumenal. A helical transmembrane segment spans residues 124-149 (ALPFFLLLIDLSRASALAKFALSSNS). Residues 150–159 (QDEVRENIAR) are Cytoplasmic-facing. The chain crosses the membrane as a helical span at residues 160–187 (GMAILGPTFTLDALVECLVIGVGTMSGV). Topologically, residues 188–191 (RQLE) are lumenal. A helical membrane pass occupies residues 192-220 (IMCCFGCMSVLANYFVFMTFFPACVSLVL). At 221–248 (ELSRESREGRPIWQLSHFARVLEEEENK) the chain is on the cytoplasmic side. Lysine 248 is covalently cross-linked (Glycyl lysine isopeptide (Lys-Gly) (interchain with G-Cter in ubiquitin)). Residues 249 to 275 (PNPVTQRVKMIMSLGLVLVHAHSRWIA) form a helical membrane-spanning segment. The Lumenal portion of the chain corresponds to 276–314 (DPSPQNSTADNSKVSLGLDENVSKRIEPSVSLWQFYLSK). N-linked (GlcNAc...) asparagine glycosylation is found at asparagine 281 and asparagine 296. The helical transmembrane segment at 315-339 (MISMDIEQVITLSLALLLAVKYIFF) threads the bilayer. The Cytoplasmic portion of the chain corresponds to 340-888 (EQAETESTLS…LEGACTKKAA (549 aa)). Residues glutamate 559, lysine 691, and aspartate 767 each act as charge relay system in the active site. The active-site Proton donor is histidine 866. Serine 872 is modified (phosphoserine; by AMPK).

It belongs to the HMG-CoA reductase family. Homotetramer. Homodimer. Interacts (via its SSD) with INSIG1; the interaction, accelerated by sterols, leads to the recruitment of HMGCR to AMFR/gp78 for its ubiquitination by the sterol-mediated ERAD pathway. Interacts with UBIAD1. In terms of processing, undergoes sterol-mediated ubiquitination and ER-associated degradation (ERAD). Accumulation of sterols in the endoplasmic reticulum (ER) membrane, triggers binding of the reductase to the ER membrane protein INSIG1 or INSIG2. The INSIG1 binding leads to the recruitment of the ubiquitin ligase, AMFR/gp78, RNF139 or RNF145, initiating ubiquitination of the reductase. The ubiquitinated reductase is then extracted from the ER membrane and delivered to cytosolic 26S proteosomes by a mechanism probably mediated by the ATPase Valosin-containing protein VCP/p97. The INSIG2-binding leads to the recruitment of the ubiquitin ligase RNF139, initiating ubiquitination of the reductase. Lys-248 is the main site of ubiquitination. Ubiquitination is enhanced by the presence of a geranylgeranylated protein. N-glycosylated. Deglycosylated by NGLY1 on release from the endoplasmic reticulum (ER) in a sterol-mediated manner. Post-translationally, phosphorylated. Phosphorylation at Ser-872 reduces the catalytic activity.

It is found in the endoplasmic reticulum membrane. The protein resides in the peroxisome membrane. It catalyses the reaction (R)-mevalonate + 2 NADP(+) + CoA = (3S)-3-hydroxy-3-methylglutaryl-CoA + 2 NADPH + 2 H(+). The protein operates within metabolic intermediate biosynthesis; (R)-mevalonate biosynthesis; (R)-mevalonate from acetyl-CoA: step 3/3. Regulated by a negative feedback mechanism through sterols and non-sterol metabolites derived from mevalonate. Phosphorylation at Ser-872 down-regulates the catalytic activity. Catalyzes the conversion of (3S)-hydroxy-3-methylglutaryl-CoA (HMG-CoA) to mevalonic acid, the rate-limiting step in the synthesis of cholesterol and other isoprenoids, thus plays a critical role in cellular cholesterol homeostasis. In Oryctolagus cuniculus (Rabbit), this protein is 3-hydroxy-3-methylglutaryl-coenzyme A reductase (HMGCR).